The sequence spans 147 residues: Large ribosomal subunit protein bL9 (147 aa).

A disordered region spans residues 44-63 (VKTLDAQKRSEDKRKEQEKL). The span at 48–63 (DAQKRSEDKRKEQEKL) shows a compositional bias: basic and acidic residues.

It belongs to the bacterial ribosomal protein bL9 family.

Its function is as follows. Binds to the 23S rRNA. In Brevibacillus brevis (strain 47 / JCM 6285 / NBRC 100599), this protein is Large ribosomal subunit protein bL9.